We begin with the raw amino-acid sequence, 745 residues long: Protein PHOX1 (745 aa).

Over residues 1-10 the composition is skewed to basic residues; it reads MGKPTGKKKN. A disordered region spans residues 1–37; that stretch reads MGKPTGKKKNNNYTEMPPTESSTTGGGKTGKSFDRSA. 3 TPR repeats span residues 52-85, 90-125, and 126-159; these read ALELKEEGNKLFQKRDYEGAMFRYDKAVKLLPRD, AYLRTSMASCYMQMGLGEYPNAINECNLALEASPRF, and SKALLKRARCYEALNKLDFAFRDSRVVLNMEPEN. Residues 280–359 enclose the PB1 domain; it reads TRTVKLVHGD…GSFRLYIAEV (80 aa). 4 TPR repeats span residues 406–441, 443–472, 494–528, and 553–586; these read EHWIFQFAQLFKNHVGFDSDSYLELHNLGMKLYTEA, EDIVTGEDAQELFDIAADKFQEMAALAMFN, ETILEKVEAGFEWAKNEYNKAAEKYEGAVKIKSDF, and GEVDIESDASQDVLKLYNKAEESMEKGMQIWEEM.

Interacts with myosin XI-1 and XI-K.

The protein localises to the cytoplasmic vesicle membrane. In terms of biological role, carboxylate clamp type tetratricopeptide repeat protein that may act as a potential Hsp90/Hsp70 co-chaperone. Contributes to polar growth of root hairs. The sequence is that of Protein PHOX1 from Arabidopsis thaliana (Mouse-ear cress).